Here is a 438-residue protein sequence, read N- to C-terminus: Putative pectate lyase 14 (438 aa).

Residues 1 to 26 (MVVARTLFSISATLIIFLALFLHVNA) form the signal peptide. N-linked (GlcNAc...) asparagine glycosylation is found at Asn40, Asn46, and Asn73. Ca(2+) is bound by residues Asp236, Asp260, and Asp264. Arg316 is an active-site residue.

This sequence belongs to the polysaccharide lyase 1 family. Requires Ca(2+) as cofactor.

It carries out the reaction Eliminative cleavage of (1-&gt;4)-alpha-D-galacturonan to give oligosaccharides with 4-deoxy-alpha-D-galact-4-enuronosyl groups at their non-reducing ends.. It participates in glycan metabolism; pectin degradation; 2-dehydro-3-deoxy-D-gluconate from pectin: step 2/5. The polypeptide is Putative pectate lyase 14 (Arabidopsis thaliana (Mouse-ear cress)).